The primary structure comprises 211 residues: Small ribosomal subunit protein uS3 (211 aa).

Positions 38 to 106 (LRNFLKKRLY…EIYLNIQEVR (69 aa)) constitute a KH type-2 domain.

This sequence belongs to the universal ribosomal protein uS3 family. Part of the 30S ribosomal subunit. Forms a tight complex with proteins S10 and S14.

Its function is as follows. Binds the lower part of the 30S subunit head. Binds mRNA in the 70S ribosome, positioning it for translation. In Geobacter sulfurreducens (strain ATCC 51573 / DSM 12127 / PCA), this protein is Small ribosomal subunit protein uS3.